The primary structure comprises 657 residues: Probable cytochrome P450 556A1 (657 aa).

Residues Phe2–Ile24 form a helical membrane-spanning segment. A disordered region spans residues Arg440–Asn486. The segment covering Asn446–Asn486 has biased composition (low complexity). Cys587 provides a ligand contact to heme.

It belongs to the cytochrome P450 family. The cofactor is heme.

Its subcellular location is the membrane. The chain is Probable cytochrome P450 556A1 (cyp556A1) from Dictyostelium discoideum (Social amoeba).